Consider the following 621-residue polypeptide: Glucose 1,6-bisphosphate synthase (621 aa).

Alpha-D-glucose 1,6-bisphosphate is bound by residues Arg-73 and Ser-175. Ser-175 serves as the catalytic Phosphoserine intermediate. Residues Ser-175, Asp-332, Asp-334, and Asp-336 each contribute to the Mg(2+) site. Ser-175 is subject to Phosphoserine. The alpha-D-glucose 1,6-bisphosphate site is built by Asp-336, Arg-337, Glu-433, Ser-435, and Lys-447.

This sequence belongs to the phosphohexose mutase family. In terms of tissue distribution, expressed at highest levels in the brain and testis, at intermediate levels in thymus, spleen, lung and skeletal muscle, and at lowest levels in kidney, liver and heart.

Its subcellular location is the cytoplasm. It is found in the cytosol. The enzyme catalyses (2R)-3-phospho-glyceroyl phosphate + alpha-D-glucose 1-phosphate = alpha-D-glucose 1,6-bisphosphate + (2R)-3-phosphoglycerate + H(+). It catalyses the reaction alpha-D-glucose 6-phosphate + (2R)-3-phospho-glyceroyl phosphate = alpha-D-glucose 1,6-bisphosphate + (2R)-3-phosphoglycerate + H(+). The catalysed reaction is (2R)-3-phospho-glyceroyl phosphate + alpha-D-ribose 1-phosphate = alpha-D-ribose 1,5-bisphosphate + (2R)-3-phosphoglycerate + H(+). It carries out the reaction 2-deoxy-alpha-D-ribose 1-phosphate + (2R)-3-phospho-glyceroyl phosphate = 2-deoxy-alpha-D-ribose 1,5-bisphosphate + (2R)-3-phosphoglycerate + H(+). The enzyme catalyses (2R)-3-phospho-glyceroyl phosphate + alpha-D-mannose 1-phosphate = alpha-D-mannose 1,6-bisphosphate + (2R)-3-phosphoglycerate + H(+). Glucose 1,6-bisphosphate synthase using 1,3-bisphosphoglycerate as a phosphate donor and a series of 1-phosphate sugars, including glucose 1-phosphate, mannose 1-phosphate, ribose 1-phosphate and deoxyribose 1-phosphate, as acceptors. In vitro, also exhibits very low phosphopentomutase and phosphoglucomutase activity which are most probably not physiologically relevant. The protein is Glucose 1,6-bisphosphate synthase of Mus musculus (Mouse).